The primary structure comprises 57 residues: Small ribosomal subunit protein bS21B (57 aa).

Residues 37 to 57 (RYEKPSARRKRKAEAARKRRR) are disordered. Residues 43-57 (ARRKRKAEAARKRRR) are compositionally biased toward basic residues.

It belongs to the bacterial ribosomal protein bS21 family.

This is Small ribosomal subunit protein bS21B from Gloeobacter violaceus (strain ATCC 29082 / PCC 7421).